A 535-amino-acid polypeptide reads, in one-letter code: Protoheme IX farnesyltransferase (535 aa).

The interval Met1 to Val263 is unknown. The next 14 membrane-spanning stretches (helical) occupy residues Trp18 to Pro38, Met40 to Tyr60, Tyr83 to Leu103, Trp127 to Ala147, Val163 to Leu183, Leu197 to Ala217, Gly262 to Ile282, Trp285 to Ile305, His334 to Val354, Leu357 to Leu377, Ile385 to Gly405, Leu412 to Ile432, Leu474 to Leu494, and Ala509 to Val529. Residues Ile264–Ala535 form a protoheme IX prenyltransferase region.

In the C-terminal section; belongs to the UbiA prenyltransferase family. Protoheme IX farnesyltransferase subfamily.

Its subcellular location is the cell membrane. The enzyme catalyses heme b + (2E,6E)-farnesyl diphosphate + H2O = Fe(II)-heme o + diphosphate. It functions in the pathway porphyrin-containing compound metabolism; heme O biosynthesis; heme O from protoheme: step 1/1. Functionally, converts heme B (protoheme IX) to heme O by substitution of the vinyl group on carbon 2 of heme B porphyrin ring with a hydroxyethyl farnesyl side group. The polypeptide is Protoheme IX farnesyltransferase (ctaB) (Roseiflexus castenholzii (strain DSM 13941 / HLO8)).